Reading from the N-terminus, the 444-residue chain is Phosphoglucosamine mutase (444 aa).

The Phosphoserine intermediate role is filled by serine 102. 4 residues coordinate Mg(2+): serine 102, aspartate 241, aspartate 243, and aspartate 245. The residue at position 102 (serine 102) is a Phosphoserine.

The protein belongs to the phosphohexose mutase family. The cofactor is Mg(2+). In terms of processing, activated by phosphorylation.

It catalyses the reaction alpha-D-glucosamine 1-phosphate = D-glucosamine 6-phosphate. In terms of biological role, catalyzes the conversion of glucosamine-6-phosphate to glucosamine-1-phosphate. This chain is Phosphoglucosamine mutase, found in Haemophilus ducreyi (strain 35000HP / ATCC 700724).